A 197-amino-acid polypeptide reads, in one-letter code: Ribonuclease HII (197 aa).

An RNase H type-2 domain is found at 14–197 (GIIAGVDEVG…RKNFAPIRIL (184 aa)). 3 residues coordinate a divalent metal cation: aspartate 20, glutamate 21, and aspartate 112.

This sequence belongs to the RNase HII family. It depends on Mn(2+) as a cofactor. The cofactor is Mg(2+).

It localises to the cytoplasm. The enzyme catalyses Endonucleolytic cleavage to 5'-phosphomonoester.. Endonuclease that specifically degrades the RNA of RNA-DNA hybrids. The sequence is that of Ribonuclease HII from Wolbachia pipientis subsp. Culex pipiens (strain wPip).